The following is a 252-amino-acid chain: Cytochrome c oxidase subunit 2 (252 aa).

At 1–39 the chain is on the mitochondrial intermembrane side; it reads MFLIMLKGHILMDAPTPWGIFFQDSASPQMEGIMELHNN. A helical membrane pass occupies residues 40 to 59; that stretch reads IMFYLAIILFTVTWMMITII. The Mitochondrial matrix segment spans residues 60-81; the sequence is RNFVAKKSPIAHKYMNHGTLIE. Residues 82–105 traverse the membrane as a helical segment; that stretch reads LIWTITPAFILILIAFPSFKLLYL. Over 106–252 the chain is Mitochondrial intermembrane; sequence MDEVMDPSLV…LLWLRDQMEG (147 aa). Cu cation is bound by residues H184, C219, E221, C223, H227, and M230. Mg(2+) is bound at residue E221.

Belongs to the cytochrome c oxidase subunit 2 family. As to quaternary structure, component of the cytochrome c oxidase (complex IV, CIV), a multisubunit enzyme composed of a catalytic core of 3 subunits and several supernumerary subunits. The complex exists as a monomer or a dimer and forms supercomplexes (SCs) in the inner mitochondrial membrane with ubiquinol-cytochrome c oxidoreductase (cytochrome b-c1 complex, complex III, CIII). Cu cation serves as cofactor.

The protein resides in the mitochondrion inner membrane. It carries out the reaction 4 Fe(II)-[cytochrome c] + O2 + 8 H(+)(in) = 4 Fe(III)-[cytochrome c] + 2 H2O + 4 H(+)(out). Functionally, component of the cytochrome c oxidase, the last enzyme in the mitochondrial electron transport chain which drives oxidative phosphorylation. The respiratory chain contains 3 multisubunit complexes succinate dehydrogenase (complex II, CII), ubiquinol-cytochrome c oxidoreductase (cytochrome b-c1 complex, complex III, CIII) and cytochrome c oxidase (complex IV, CIV), that cooperate to transfer electrons derived from NADH and succinate to molecular oxygen, creating an electrochemical gradient over the inner membrane that drives transmembrane transport and the ATP synthase. Cytochrome c oxidase is the component of the respiratory chain that catalyzes the reduction of oxygen to water. Electrons originating from reduced cytochrome c in the intermembrane space (IMS) are transferred via the dinuclear copper A center (CU(A)) of subunit 2 and heme A of subunit 1 to the active site in subunit 1, a binuclear center (BNC) formed by heme A3 and copper B (CU(B)). The BNC reduces molecular oxygen to 2 water molecules using 4 electrons from cytochrome c in the IMS and 4 protons from the mitochondrial matrix. The sequence is that of Cytochrome c oxidase subunit 2 (cox2) from Emericella nidulans (Aspergillus nidulans).